The primary structure comprises 361 residues: Caspase activity and apoptosis inhibitor 1 (361 aa).

The segment covering 1–14 has biased composition (basic residues); it reads MTGKKSSREKRRKR. Disordered stretches follow at residues 1 to 28 and 67 to 100; these read MTGKKSSREKRRKRSSQEAAAALAAPDI and GGSGGSCWGGSSVERSERRKRRSTDSSSVSGSLQ. Residues 19–28 are compositionally biased toward low complexity; it reads AAAALAAPDI. S89 is subject to Phosphoserine. T90 is subject to Phosphothreonine. K104 is covalently cross-linked (Glycyl lysine isopeptide (Lys-Gly) (interchain with G-Cter in SUMO2)). S120 and S203 each carry phosphoserine. Disordered regions lie at residues 198 to 218 and 230 to 331; these read DNGMDSDMEEEADDGSKMGSD and ASSV…DVQP. A compositionally biased stretch (acidic residues) spans 199–210; the sequence is NGMDSDMEEEAD. The segment covering 234–251 has biased composition (basic and acidic residues); the sequence is RENKQPEGLELKQGKGED. Positions 272 to 281 are enriched in low complexity; it reads EEAAAPEAPE. Residues 281–311 are a coiled coil; the sequence is ENTVQSEAGQIDDLEKDIEKSVNEILGLAES. S312 is subject to Phosphoserine.

As to expression, ubiquitous.

In terms of biological role, anti-apoptotic protein that modulates a caspase-10 dependent mitochondrial caspase-3/9 feedback amplification loop. The protein is Caspase activity and apoptosis inhibitor 1 (CAAP1) of Homo sapiens (Human).